The following is a 151-amino-acid chain: Zinc finger HIT domain-containing protein 3 (151 aa).

Cysteine 11, cysteine 14, cysteine 22, cysteine 25, cysteine 30, cysteine 34, histidine 38, and cysteine 42 together coordinate Zn(2+). The segment at 11 to 42 adopts an HIT-type zinc-finger fold; the sequence is CVVCLEKPKYRCPTCRVPYCSVPCFQKHKEQC. Residues 43–53 show a composition bias toward basic and acidic residues; that stretch reads SSEARPVEKRR. Residues 43 to 81 form a disordered region; sequence SSEARPVEKRRAGPPVRSEESKDDDSSVADFLNSDEEED. The segment covering 63–81 has biased composition (acidic residues); the sequence is SKDDDSSVADFLNSDEEED. Serine 76 is modified (phosphoserine).

In terms of assembly, thyroid receptor interacting proteins (TRIPs) specifically interact with the ligand binding domain of the thyroid receptor (TR). Requires the presence of thyroid hormone for its interaction. Interacts with NUFIP1. Interacts (via HIT-type zinc finger) with the RUVBL1/RUVBL2 complex in the presence of ADP. In terms of tissue distribution, expressed in the cerebellum.

The protein resides in the cytoplasm. The protein localises to the nucleus. This chain is Zinc finger HIT domain-containing protein 3 (Znhit3), found in Mus musculus (Mouse).